We begin with the raw amino-acid sequence, 451 residues long: Trimethylamine monooxygenase (451 aa).

Residues Ser12, Glu37, Gln39, Leu45, Trp46, and His62 each contribute to the FAD site. NADP(+)-binding residues include Trp70 and Asn72. Residues Asn72 and Val125 each contribute to the FAD site. NADP(+)-binding residues include Ser204, Ser205, Ser207, and Arg228. Residues Gln317 and Thr320 each coordinate FAD. Arg411 is a binding site for NADP(+).

This sequence belongs to the FMO family. FAD serves as cofactor.

The catalysed reaction is trimethylamine + NADPH + O2 = trimethylamine N-oxide + NADP(+) + H2O. Its function is as follows. Catalyzes the oxidation of trimethylamine (TMA) to produce trimethylamine N-oxide (TMAO). In vitro, has a broad substrate specificity, oxidizing many nitrogen- and sulfur-containing compounds, including dimethylamine (DMA), dimethylsulfide (DMS), dimethylsulfoxide (DMSO), cysteamine, methimazole and dimethylaniline. The chain is Trimethylamine monooxygenase from Methylocella silvestris (strain DSM 15510 / CIP 108128 / LMG 27833 / NCIMB 13906 / BL2).